The primary structure comprises 76 residues: Toxin Acra III-2 (76 aa).

An LCN-type CS-alpha/beta domain is found at 3–67; it reads VPGNYPLNTY…IWDAVKNHCT (65 aa). 3 cysteine pairs are disulfide-bonded: Cys-18–Cys-41, Cys-27–Cys-46, and Cys-31–Cys-48.

Belongs to the long (3 C-C) scorpion toxin superfamily. Sodium channel inhibitor family. Beta subfamily. In terms of tissue distribution, expressed by the venom gland.

It is found in the secreted. Its function is as follows. Binds to sodium channels (Nav) and affects the channel activation process. This is Toxin Acra III-2 from Androctonus crassicauda (Arabian fat-tailed scorpion).